The primary structure comprises 115 residues: Large ribosomal subunit protein bL19 (115 aa).

Belongs to the bacterial ribosomal protein bL19 family.

Functionally, this protein is located at the 30S-50S ribosomal subunit interface and may play a role in the structure and function of the aminoacyl-tRNA binding site. The protein is Large ribosomal subunit protein bL19 of Kosmotoga olearia (strain ATCC BAA-1733 / DSM 21960 / TBF 19.5.1).